A 185-amino-acid chain; its full sequence is Alcohol dehydrogenase 1 (185 aa).

Residues glycine 10–glycine 15, aspartate 34, lysine 39, valine 103–valine 105, and arginine 180 contribute to the NAD(+) site.

Belongs to the zinc-containing alcohol dehydrogenase family. Class-I subfamily. Homodimer. It depends on Zn(2+) as a cofactor.

The protein localises to the cytoplasm. The catalysed reaction is a primary alcohol + NAD(+) = an aldehyde + NADH + H(+). It catalyses the reaction a secondary alcohol + NAD(+) = a ketone + NADH + H(+). The chain is Alcohol dehydrogenase 1 (ADH1) from Anas platyrhynchos (Mallard).